The primary structure comprises 358 residues: Leukotriene B4 receptor 2 (358 aa).

At 1–24 the chain is on the extracellular side; that stretch reads MSVCYRPPGNETLLSWKGSRATGT. N-linked (GlcNAc...) asparagine glycosylation occurs at Asn10. The helical transmembrane segment at 25-45 threads the bilayer; sequence AFLLLAALLGLPGNGFVVWSL. Residues 46–60 lie on the Cytoplasmic side of the membrane; that stretch reads AGWRPTAGRPLAATL. A helical membrane pass occupies residues 61-81; that stretch reads VLHLALADGAVLLLTPLFVAF. Over 82 to 96 the chain is Extracellular; it reads LSRQAWPLGQVGCKA. Residues 97 to 117 traverse the membrane as a helical segment; it reads VYYVCALSMYASVLLTGLLSL. The Cytoplasmic segment spans residues 118 to 140; it reads QRCLAVTRPFLAPRLRSPALARR. The helical transmembrane segment at 141–161 threads the bilayer; that stretch reads LLLGVWLAALVLAVPAAVYRH. Over 162–185 the chain is Extracellular; it reads LWGDRVCQLCHPSAVHAAAHLSLE. The chain crosses the membrane as a helical span at residues 186–206; it reads TLTAFVLPFGTVLGCYGVTLA. Residues 207–225 lie on the Cytoplasmic side of the membrane; it reads RLRGARWGSGRQGTRVGRL. The helical transmembrane segment at 226–246 threads the bilayer; it reads VSAIVLAFGLLWAPYHAVNLL. Residues 247–275 lie on the Extracellular side of the membrane; the sequence is QAVAALAPPEGPLARLGGAGQAARAGTTA. The chain crosses the membrane as a helical span at residues 276–296; it reads LAFFSSSVNPVLYVFTAGDLL. Residues 297–358 are Cytoplasmic-facing; that stretch reads PRAGPRFLTR…GRMEKDSQEW (62 aa). The interval 315 to 358 is disordered; it reads RVGSRSREGTMELRTTPRLKVVGQGRGYGDPGGGGRMEKDSQEW. Residues 338 to 349 show a composition bias toward gly residues; the sequence is QGRGYGDPGGGG.

It belongs to the G-protein coupled receptor 1 family.

It localises to the cell membrane. Functionally, low-affinity receptor for leukotrienes including leukotriene B4. Mediates chemotaxis of granulocytes and macrophages. The response is mediated via G-proteins that activate a phosphatidylinositol-calcium second messenger system. The polypeptide is Leukotriene B4 receptor 2 (Ltb4r2) (Rattus norvegicus (Rat)).